The chain runs to 149 residues: Transcriptional regulator MraZ (149 aa).

SpoVT-AbrB domains lie at 7–54 (KYVN…GISH) and 83–126 (AVQL…QPQN).

The protein belongs to the MraZ family. Forms oligomers.

It is found in the cytoplasm. The protein resides in the nucleoid. The sequence is that of Transcriptional regulator MraZ from Rickettsia akari (strain Hartford).